A 255-amino-acid chain; its full sequence is NAD-dependent protein deacylase (255 aa).

A Deacetylase sirtuin-type domain is found at 1-252 (MPKLVVFSGA…AEIEQELEQF (252 aa)). 9–28 (GAGLSAESGLETFRDNGGLW) contacts NAD(+). 2 residues coordinate substrate: Tyr-53 and Arg-56. 103–106 (QNVD) contributes to the NAD(+) binding site. Residue His-121 is the Proton acceptor of the active site. Zn(2+)-binding residues include Cys-129, Cys-132, Cys-148, and Cys-151. NAD(+)-binding positions include 190-192 (GTS), 218-220 (NLQ), and Thr-238.

This sequence belongs to the sirtuin family. Class III subfamily. Requires Zn(2+) as cofactor.

It is found in the cytoplasm. The enzyme catalyses N(6)-acetyl-L-lysyl-[protein] + NAD(+) + H2O = 2''-O-acetyl-ADP-D-ribose + nicotinamide + L-lysyl-[protein]. It catalyses the reaction N(6)-succinyl-L-lysyl-[protein] + NAD(+) + H2O = 2''-O-succinyl-ADP-D-ribose + nicotinamide + L-lysyl-[protein]. Functionally, NAD-dependent lysine deacetylase and desuccinylase that specifically removes acetyl and succinyl groups on target proteins. Modulates the activities of several proteins which are inactive in their acylated form. The protein is NAD-dependent protein deacylase of Helicobacter hepaticus (strain ATCC 51449 / 3B1).